A 499-amino-acid chain; its full sequence is Glutamyl-tRNA(Gln) amidotransferase subunit A (499 aa).

Active-site charge relay system residues include K79 and S159. S183 functions as the Acyl-ester intermediate in the catalytic mechanism.

The protein belongs to the amidase family. GatA subfamily. Heterotrimer of A, B and C subunits.

The enzyme catalyses L-glutamyl-tRNA(Gln) + L-glutamine + ATP + H2O = L-glutaminyl-tRNA(Gln) + L-glutamate + ADP + phosphate + H(+). Its function is as follows. Allows the formation of correctly charged Gln-tRNA(Gln) through the transamidation of misacylated Glu-tRNA(Gln) in organisms which lack glutaminyl-tRNA synthetase. The reaction takes place in the presence of glutamine and ATP through an activated gamma-phospho-Glu-tRNA(Gln). In Granulibacter bethesdensis (strain ATCC BAA-1260 / CGDNIH1), this protein is Glutamyl-tRNA(Gln) amidotransferase subunit A.